The sequence spans 141 residues: Large ribosomal subunit protein uL11 (141 aa).

This sequence belongs to the universal ribosomal protein uL11 family. As to quaternary structure, part of the ribosomal stalk of the 50S ribosomal subunit. Interacts with L10 and the large rRNA to form the base of the stalk. L10 forms an elongated spine to which L12 dimers bind in a sequential fashion forming a multimeric L10(L12)X complex. One or more lysine residues are methylated.

Forms part of the ribosomal stalk which helps the ribosome interact with GTP-bound translation factors. This Acetivibrio thermocellus (strain ATCC 27405 / DSM 1237 / JCM 9322 / NBRC 103400 / NCIMB 10682 / NRRL B-4536 / VPI 7372) (Clostridium thermocellum) protein is Large ribosomal subunit protein uL11.